Reading from the N-terminus, the 241-residue chain is Biosynthetic peptidoglycan transglycosylase (241 aa).

Residues 18-38 form a helical membrane-spanning segment; it reads GVIGIIALWMAGILIFAFLPV.

The protein belongs to the glycosyltransferase 51 family.

It localises to the cell inner membrane. The catalysed reaction is [GlcNAc-(1-&gt;4)-Mur2Ac(oyl-L-Ala-gamma-D-Glu-L-Lys-D-Ala-D-Ala)](n)-di-trans,octa-cis-undecaprenyl diphosphate + beta-D-GlcNAc-(1-&gt;4)-Mur2Ac(oyl-L-Ala-gamma-D-Glu-L-Lys-D-Ala-D-Ala)-di-trans,octa-cis-undecaprenyl diphosphate = [GlcNAc-(1-&gt;4)-Mur2Ac(oyl-L-Ala-gamma-D-Glu-L-Lys-D-Ala-D-Ala)](n+1)-di-trans,octa-cis-undecaprenyl diphosphate + di-trans,octa-cis-undecaprenyl diphosphate + H(+). It participates in cell wall biogenesis; peptidoglycan biosynthesis. Peptidoglycan polymerase that catalyzes glycan chain elongation from lipid-linked precursors. The protein is Biosynthetic peptidoglycan transglycosylase of Yersinia pseudotuberculosis serotype IB (strain PB1/+).